Here is a 583-residue protein sequence, read N- to C-terminus: Radixin (583 aa).

Residues 5-295 form the FERM domain; that stretch reads INVRVTTMDA…GNHELYMRRR (291 aa). 60-63 is a binding site for a 1,2-diacyl-sn-glycero-3-phospho-(1D-myo-inositol); sequence KLNK. Lys83 bears the N6-succinyllysine mark. Lys278 contacts a 1,2-diacyl-sn-glycero-3-phospho-(1D-myo-inositol). Disordered regions lie at residues 310-330, 376-407, and 462-526; these read REEK…KKKR, DQER…AKQA, and ELKT…RVKK. Positions 376-400 are enriched in basic and acidic residues; that stretch reads DQERKRAKEEAERLEKERRAAEEAK. Residues 469 to 480 are compositionally biased toward pro residues; the sequence is APPPPPPPPVIP. Composition is skewed to basic and acidic residues over residues 483–492 and 506–525; these read ENEHDEHDEN and MNHR…ERVK. The residue at position 564 (Thr564) is a Phosphothreonine; by ROCK2.

In terms of assembly, binds NHERF1. Interacts with NHERF1, NHERF2, LAYN, MME/NEP and ICAM2. Interacts with CPNE1 (via VWFA domain) and CPNE4 (via VWFA domain). Interacts (via FERM domain) with SPN/CD43 cytoplasmic tail. Interacts with CD44. Interacts with CLIC5; may work together in a complex which also includes EZR and MYO6 to stabilize linkages between the plasma membrane and subjacent actin cytoskeleton at the base of stereocilia. Post-translationally, phosphorylated by tyrosine-protein kinases. Phosphorylation by ROCK2 suppresses the head-to-tail association of the N-terminal and C-terminal halves resulting in an opened conformation which is capable of actin and membrane-binding.

Its subcellular location is the cell membrane. The protein localises to the cytoplasm. It is found in the cytoskeleton. The protein resides in the cleavage furrow. It localises to the cell projection. Its subcellular location is the microvillus. The protein localises to the stereocilium. Its activity is regulated as follows. A head-to-tail association, of the N-terminal and C-terminal halves results in a closed conformation (inactive form) which is incapable of actin or membrane-binding. Probably plays a crucial role in the binding of the barbed end of actin filaments to the plasma membrane. This is Radixin (RDX) from Homo sapiens (Human).